Reading from the N-terminus, the 556-residue chain is 2-isopropylmalate synthase (556 aa).

In terms of domain architecture, Pyruvate carboxyltransferase spans 33 to 307 (PIWCSSDLRD…HPQLDFSDID (275 aa)). 4 residues coordinate Mg(2+): D42, H246, H248, and N282. The regulatory domain stretch occupies residues 439–556 (ATSPYALASH…AVTQAEAKAA (118 aa)).

The protein belongs to the alpha-IPM synthase/homocitrate synthase family. LeuA type 2 subfamily. As to quaternary structure, homodimer. The cofactor is Mg(2+).

Its subcellular location is the cytoplasm. The enzyme catalyses 3-methyl-2-oxobutanoate + acetyl-CoA + H2O = (2S)-2-isopropylmalate + CoA + H(+). Its pathway is amino-acid biosynthesis; L-leucine biosynthesis; L-leucine from 3-methyl-2-oxobutanoate: step 1/4. Catalyzes the condensation of the acetyl group of acetyl-CoA with 3-methyl-2-oxobutanoate (2-ketoisovalerate) to form 3-carboxy-3-hydroxy-4-methylpentanoate (2-isopropylmalate). The protein is 2-isopropylmalate synthase of Pseudomonas paraeruginosa (strain DSM 24068 / PA7) (Pseudomonas aeruginosa (strain PA7)).